A 119-amino-acid chain; its full sequence is Large ribosomal subunit protein bL20 (119 aa).

It belongs to the bacterial ribosomal protein bL20 family.

Binds directly to 23S ribosomal RNA and is necessary for the in vitro assembly process of the 50S ribosomal subunit. It is not involved in the protein synthesizing functions of that subunit. The protein is Large ribosomal subunit protein bL20 of Burkholderia ambifaria (strain MC40-6).